A 398-amino-acid polypeptide reads, in one-letter code: MRASYLFTSESVSEGHPDKVCDRISDEIVDLFYREGPKAGIDPWQIRAACETLATTNKVVIAGETRGPKSVTNEQIEGVVRAAIKDIGYEQEGFHWKTCDIEILLHPQSADIAQGVDALQPGEVKEEGAGDQGIMFGYATNETPDLMPAPIFYAHKILRLISEARHSGREKVLGPDSKSQVTVQYENGKPVGVREIVVSHQHLVPDLTSSQVRDIVEPYVREALPKDWITPKTIWHINPTGKFYIGGPDGDAGLTGRKIIVDTYGGAAPHGGGAFSGKDPTKVDRSAAYAARYVAKNIVAAGLADRCTLQLAYAIGVARPLSIYIDTHGTGKVPEEQLEKAAAQAMDLTPRGIRSHLDLNRPIYARTSAYGHFGRTPDNEGGFSWEKTDLVEQLKRAL.

Histidine 16 is a binding site for ATP. Aspartate 18 provides a ligand contact to Mg(2+). Glutamate 51 serves as a coordination point for K(+). L-methionine is bound by residues glutamate 64 and glutamine 108. Residues 108–118 form a flexible loop region; the sequence is QSADIAQGVDA. ATP contacts are provided by residues 176–178, 242–243, aspartate 251, 257–258, alanine 274, and lysine 278; these read DSK, KF, and RK. Position 251 (aspartate 251) interacts with L-methionine. Position 282 (lysine 282) interacts with L-methionine.

The protein belongs to the AdoMet synthase family. In terms of assembly, homotetramer; dimer of dimers. Requires Mg(2+) as cofactor. K(+) serves as cofactor.

Its subcellular location is the cytoplasm. It carries out the reaction L-methionine + ATP + H2O = S-adenosyl-L-methionine + phosphate + diphosphate. It participates in amino-acid biosynthesis; S-adenosyl-L-methionine biosynthesis; S-adenosyl-L-methionine from L-methionine: step 1/1. Its function is as follows. Catalyzes the formation of S-adenosylmethionine (AdoMet) from methionine and ATP. The overall synthetic reaction is composed of two sequential steps, AdoMet formation and the subsequent tripolyphosphate hydrolysis which occurs prior to release of AdoMet from the enzyme. The sequence is that of S-adenosylmethionine synthase from Bradyrhizobium diazoefficiens (strain JCM 10833 / BCRC 13528 / IAM 13628 / NBRC 14792 / USDA 110).